A 1235-amino-acid chain; its full sequence is UPF0507 protein DEHA2G04334g (1235 aa).

Positions 323 to 487 constitute a VPS9 domain; the sequence is QNDDSDAIKI…LSSSMNDEPQ (165 aa). Residues 1097 to 1124 are disordered; it reads STTEADTTDTTDATDATHASPNLANSTN. Low complexity predominate over residues 1100-1115; it reads EADTTDTTDATDATHA.

The protein belongs to the UPF0507 family.

The protein is UPF0507 protein DEHA2G04334g of Debaryomyces hansenii (strain ATCC 36239 / CBS 767 / BCRC 21394 / JCM 1990 / NBRC 0083 / IGC 2968) (Yeast).